We begin with the raw amino-acid sequence, 547 residues long: Chaperonin GroEL (547 aa).

ATP-binding positions include 30–33 (TLGP), Lys-51, 87–91 (DGTTT), Gly-415, and Asp-496.

It belongs to the chaperonin (HSP60) family. In terms of assembly, forms a cylinder of 14 subunits composed of two heptameric rings stacked back-to-back. Interacts with the co-chaperonin GroES.

It localises to the cytoplasm. It carries out the reaction ATP + H2O + a folded polypeptide = ADP + phosphate + an unfolded polypeptide.. Functionally, together with its co-chaperonin GroES, plays an essential role in assisting protein folding. The GroEL-GroES system forms a nano-cage that allows encapsulation of the non-native substrate proteins and provides a physical environment optimized to promote and accelerate protein folding. In Mannheimia succiniciproducens (strain KCTC 0769BP / MBEL55E), this protein is Chaperonin GroEL.